Reading from the N-terminus, the 368-residue chain is Protein trichome birefringence-like 43 (368 aa).

The chain crosses the membrane as a helical; Signal-anchor for type II membrane protein span at residues 9-25; the sequence is GVVSVMVLMILVLLKQI. The GDS motif signature appears at 117 to 119; that stretch reads GDS. A DCXHWCLPGXXDXWN motif motif is present at residues 344–358; it reads DCSHWCLSGVPDSWN.

Belongs to the PC-esterase family. TBL subfamily.

The protein resides in the membrane. Functionally, may act as a bridging protein that binds pectin and other cell wall polysaccharides. Probably involved in maintaining esterification of pectins. May be involved in the specific O-acetylation of cell wall polymers. The protein is Protein trichome birefringence-like 43 (TBL43) of Arabidopsis thaliana (Mouse-ear cress).